Reading from the N-terminus, the 291-residue chain is Phosphatidylglycerol--prolipoprotein diacylglyceryl transferase (291 aa).

7 helical membrane-spanning segments follow: residues 21–41 (VALHWYGLMYLVGFVFAMWLA), 60–80 (LLYAGFLGVFLGGRIGYVLFY), 96–116 (WDGGMSFHGGLIGVILVMIIF), 130–150 (FIAPLIPFGLGAGRLGNFING), 198–218 (SQLYELALEGVVLFIILNLFI), 225–245 (GAVSGLFLIGYGALRIIVEFF), and 260–280 (ISMGQILSIPMIIAGAIMMVW). Arg143 provides a ligand contact to a 1,2-diacyl-sn-glycero-3-phospho-(1'-sn-glycerol).

The protein belongs to the Lgt family.

It is found in the cell inner membrane. It catalyses the reaction L-cysteinyl-[prolipoprotein] + a 1,2-diacyl-sn-glycero-3-phospho-(1'-sn-glycerol) = an S-1,2-diacyl-sn-glyceryl-L-cysteinyl-[prolipoprotein] + sn-glycerol 1-phosphate + H(+). The protein operates within protein modification; lipoprotein biosynthesis (diacylglyceryl transfer). Functionally, catalyzes the transfer of the diacylglyceryl group from phosphatidylglycerol to the sulfhydryl group of the N-terminal cysteine of a prolipoprotein, the first step in the formation of mature lipoproteins. This is Phosphatidylglycerol--prolipoprotein diacylglyceryl transferase from Salmonella choleraesuis (strain SC-B67).